A 499-amino-acid polypeptide reads, in one-letter code: Protein flp (499 aa).

4 consecutive transmembrane segments (helical) span residues L6 to T26, F389 to Y409, L433 to L453, and L471 to L491.

Its subcellular location is the cell membrane. Functionally, its precise function is unknown. Has no penicillin-binding activity and is not involved in methicillin resistance. The chain is Protein flp (flp) from Staphylococcus aureus (strain MRSA252).